Consider the following 503-residue polypeptide: Arginyl-tRNA--protein transferase 1 (503 aa).

It belongs to the R-transferase family.

Its subcellular location is the cytoplasm. The catalysed reaction is an N-terminal L-alpha-aminoacyl-[protein] + L-arginyl-tRNA(Arg) = an N-terminal L-arginyl-L-aminoacyl-[protein] + tRNA(Arg) + H(+). In terms of biological role, involved in the post-translational conjugation of arginine to the N-terminal aspartate or glutamate of a protein. This arginylation is required for degradation of the protein via the ubiquitin pathway. Does not arginylate cysteine residues. This is Arginyl-tRNA--protein transferase 1 (ATE1) from Saccharomyces cerevisiae (strain ATCC 204508 / S288c) (Baker's yeast).